The chain runs to 492 residues: Thyroid hormone receptor alpha (492 aa).

Positions 1 to 33 (MEQKPSKVECGSDPEENSARSPDGKRKRKNGQC) are disordered. The segment at 1 to 52 (MEQKPSKVECGSDPEENSARSPDGKRKRKNGQCPLKSSMSGYIPSYLDKDEQ) is modulating. Zn(2+) is bound by residues Cys-53, Cys-56, Cys-70, Cys-73, Cys-91, Cys-97, Cys-107, and Cys-110. 2 NR C4-type zinc fingers span residues 53 to 73 (CVVC…CEGC) and 91 to 115 (CKYD…FKKC). The segment at residues 53–127 (CVVCGDKATG…VGMAMDLVLD (75 aa)) is a DNA-binding region (nuclear receptor). An NR LBD domain is found at 163–407 (EEWDLIHVAT…EGQQLLGMHV (245 aa)). Residues Arg-228 and Ser-277 each contribute to the 3,3',5-triiodo-L-thyronine site. The tract at residues 457-492 (AVCGEDDSSEASSLSSSSSDEDTEVFEDLAGKAASP) is disordered.

The protein belongs to the nuclear hormone receptor family. NR1 subfamily. Binds DNA as a dimer; homodimer and heterodimer with RXRB. Interacts with NCOA3 and NCOA6 coactivators, leading to a strong increase of transcription of target genes. Probably interacts with SFPQ. Interacts with C1D. Interacts with AKAP13. Interacts with TP53INP2. Interacts with PER2. Isoform alpha-2 and isoform alpha-1 interact with TACC1, but the interaction with alpha-1 is weaker. The interaction with isoform alpha-1, but not alpha-2, is decreased in the presence of thyroid hormone T3.

It is found in the nucleus. The protein localises to the cytoplasm. In terms of biological role, nuclear hormone receptor that can act as a repressor or activator of transcription. High affinity receptor for thyroid hormones, including triiodothyronine and thyroxine. This is Thyroid hormone receptor alpha (Thra) from Rattus norvegicus (Rat).